Consider the following 332-residue polypeptide: Aquaporin-7-2 (332 aa).

The span at 1–40 (MSGQHQITEQPSGNPLSRTSTLIQEKPLTPTSSHAGTQKQ) shows a compositional bias: polar residues. Positions 1-46 (MSGQHQITEQPSGNPLSRTSTLIQEKPLTPTSSHAGTQKQPEAPRQ) are disordered. Residues 1–66 (MSGQHQITEQ…RHAIRKPMAE (66 aa)) lie on the Cytoplasmic side of the membrane. A helical membrane pass occupies residues 67–87 (FFGVALLIIFGAGSACQVVLS). Over 88–100 (TNPDVASSARGSF) the chain is Extracellular. The helical transmembrane segment at 101-121 (LSINFGWAIGIAMGVWVSGGI) threads the bilayer. Residues 122–144 (SGGHINPAITIAMATYRGFPWCK) lie on the Cytoplasmic side of the membrane. The NPA 1 motif lies at 127-129 (NPA). The chain crosses the membrane as a helical span at residues 145–165 (VPSYILAQVLGGVVGAALVYA). The Extracellular portion of the chain corresponds to 166-199 (NYIHAIDVFEGGHHIRTEATASLFATYALPYMTQ). Residues 200 to 220 (ASCFFSEFLATAVLSMMVFAL) traverse the membrane as a helical segment. Topologically, residues 221-230 (TDKRNHSPTN) are cytoplasmic. A helical membrane pass occupies residues 231-251 (GLLPFALFILFVGLGASLGME). Topologically, residues 252–283 (TAYALNPARDFGPRLFLAMAGYGKALFNYRSQ) are extracellular. The NPA 2 motif lies at 257–259 (NPA). Residues 284-304 (YWLWAPIIAPVLGAQAGGLLY) traverse the membrane as a helical segment. Residues 305-332 (DTFLNDGDNSPIKWRCASSQEQQLAEVV) lie on the Cytoplasmic side of the membrane.

It belongs to the MIP/aquaporin (TC 1.A.8) family.

The protein resides in the membrane. It catalyses the reaction H2O(in) = H2O(out). In terms of biological role, water channel required to facilitate the transport of water across membranes. Does not mediate the transport carbon dioxide across the membrane. The chain is Aquaporin-7-2 from Laccaria bicolor (Bicoloured deceiver).